Consider the following 202-residue polypeptide: Putative 3-methyladenine DNA glycosylase (202 aa).

Belongs to the DNA glycosylase MPG family.

The chain is Putative 3-methyladenine DNA glycosylase from Staphylococcus aureus (strain Mu3 / ATCC 700698).